We begin with the raw amino-acid sequence, 470 residues long: Uronate isomerase (470 aa).

It belongs to the metallo-dependent hydrolases superfamily. Uronate isomerase family.

It catalyses the reaction D-glucuronate = D-fructuronate. The enzyme catalyses aldehydo-D-galacturonate = keto-D-tagaturonate. It functions in the pathway carbohydrate metabolism; pentose and glucuronate interconversion. The polypeptide is Uronate isomerase (Vibrio vulnificus (strain YJ016)).